Here is a 402-residue protein sequence, read N- to C-terminus: Argininosuccinate synthase (402 aa).

Residue 8 to 16 participates in ATP binding; sequence AYSGGLDTS. L-citrulline-binding residues include Tyr86 and Ser91. Gly116 lines the ATP pocket. The L-aspartate site is built by Thr118, Asn122, and Asp123. Asn122 contacts L-citrulline. Residues Arg126, Ser175, Ser184, Glu260, and Tyr272 each coordinate L-citrulline.

Belongs to the argininosuccinate synthase family. Type 1 subfamily. In terms of assembly, homotetramer.

Its subcellular location is the cytoplasm. It carries out the reaction L-citrulline + L-aspartate + ATP = 2-(N(omega)-L-arginino)succinate + AMP + diphosphate + H(+). It participates in amino-acid biosynthesis; L-arginine biosynthesis; L-arginine from L-ornithine and carbamoyl phosphate: step 2/3. In Clostridium novyi (strain NT), this protein is Argininosuccinate synthase.